The following is a 61-amino-acid chain: Bowman-Birk type proteinase inhibitor (61 aa).

7 disulfides stabilise this stretch: cysteine 4/cysteine 57, cysteine 5/cysteine 20, cysteine 8/cysteine 53, cysteine 10/cysteine 18, cysteine 27/cysteine 34, cysteine 31/cysteine 46, and cysteine 36/cysteine 44.

Belongs to the Bowman-Birk serine protease inhibitor family.

Its function is as follows. Strong inhibitor of trypsin with a 1:1 stoichiometry. Weaker inhibitor of chymotrypsin. This chain is Bowman-Birk type proteinase inhibitor, found in Erythrina variegata (Indian coral tree).